Here is a 460-residue protein sequence, read N- to C-terminus: MRQEWVAPRRGQANVSQMHYARQGIITEEMTYVAKRENLSPELIRSEIARGRLIIPANINHLNLEPMAIGIASKCKVNANIGASPNSSNINEELEKLHLAVKYGADTVMDLSTGGGNLDEIRTAIINASPVPIGTVPIYQAVESVHGNIEKLTPEDFLHIIEKHAGQGVDYMTIHAGILIEHLPLVKTRLTGIVSRGGGIIAKWMLHHHKQNPLYTHFDEIIEIFKRYDVSFSLGDSLRPGCTHDASDAAQLAELKTLGQLTRRAWEHDVQVMVEGPGHVPMDQIEFNVKKQMEECSEAPFYVLGPLVTDIAPGYDHITSAIGAALAGWYGTAMLCYVTPKEHLGLPNAEDVRNGLIAYKIAAHAADIARHRPGARDRDDELSIARYNFDWNRQFQLSLDPDRAKEYHDETLPADIYKTAEFCSMCGPKFCPMQTKVDADAITELEKFLASQNQDNLTPV.

Substrate-binding positions include Asn-80, Met-109, Tyr-139, His-175, 195 to 197 (SRG), 236 to 239 (DSLR), and Glu-275. His-279 contributes to the Zn(2+) binding site. Substrate is bound at residue Tyr-302. His-343 is a binding site for Zn(2+). [4Fe-4S] cluster is bound by residues Cys-423, Cys-426, and Cys-431.

The protein belongs to the ThiC family. The cofactor is [4Fe-4S] cluster.

It carries out the reaction 5-amino-1-(5-phospho-beta-D-ribosyl)imidazole + S-adenosyl-L-methionine = 4-amino-2-methyl-5-(phosphooxymethyl)pyrimidine + CO + 5'-deoxyadenosine + formate + L-methionine + 3 H(+). It participates in cofactor biosynthesis; thiamine diphosphate biosynthesis. Catalyzes the synthesis of the hydroxymethylpyrimidine phosphate (HMP-P) moiety of thiamine from aminoimidazole ribotide (AIR) in a radical S-adenosyl-L-methionine (SAM)-dependent reaction. This is Phosphomethylpyrimidine synthase from Microcystis aeruginosa (strain NIES-843 / IAM M-2473).